A 1407-amino-acid polypeptide reads, in one-letter code: DNA-directed RNA polymerase subunit beta' (1407 aa).

Positions 70, 72, 85, and 88 each coordinate Zn(2+). Residues D460, D462, and D464 each contribute to the Mg(2+) site. Positions 814, 888, 895, and 898 each coordinate Zn(2+).

Belongs to the RNA polymerase beta' chain family. In terms of assembly, the RNAP catalytic core consists of 2 alpha, 1 beta, 1 beta' and 1 omega subunit. When a sigma factor is associated with the core the holoenzyme is formed, which can initiate transcription. The cofactor is Mg(2+). Zn(2+) is required as a cofactor.

The catalysed reaction is RNA(n) + a ribonucleoside 5'-triphosphate = RNA(n+1) + diphosphate. DNA-dependent RNA polymerase catalyzes the transcription of DNA into RNA using the four ribonucleoside triphosphates as substrates. The protein is DNA-directed RNA polymerase subunit beta' of Pectobacterium atrosepticum (strain SCRI 1043 / ATCC BAA-672) (Erwinia carotovora subsp. atroseptica).